The following is a 426-amino-acid chain: Lactate racemase (426 aa).

Asp-72–Arg-75 serves as a coordination point for Ni(II)-pyridinium-3,5-bisthiocarboxylate mononucleotide. Catalysis depends on proton donor/acceptor residues His-108 and His-174. Ni(II)-pyridinium-3,5-bisthiocarboxylate mononucleotide-binding residues include Lys-184 and His-200. Substrate-binding residues include Gln-295 and Lys-298.

Belongs to the lactate racemase family. As to quaternary structure, homodimer. Ni(II)-pyridinium-3,5-bisthiocarboxylate mononucleotide serves as cofactor.

It carries out the reaction (S)-lactate = (R)-lactate. Activation of the apo-enzyme requires the three accessory proteins LarB, LarE and LarC, that are involved in the biosynthesis of the nickel-pincer cofactor of LarA. In terms of biological role, catalyzes the interconversion between the D- and L-isomers of lactate. The polypeptide is Lactate racemase (Thermoanaerobacterium thermosaccharolyticum (strain ATCC 7956 / DSM 571 / NCIMB 9385 / NCA 3814 / NCTC 13789 / WDCM 00135 / 2032) (Clostridium thermosaccharolyticum)).